The following is a 773-amino-acid chain: E3 ubiquitin-protein ligase RFWD3 (773 aa).

4 disordered regions span residues 18–67 (VAEQ…SQVG), 92–117 (RVEN…IPVS), 139–230 (LRPP…EEVV), and 259–279 (GETL…SVSK). Ser47 bears the Phosphoserine; by ATM and ATR mark. Residues 50–59 (APPLLQPAPA) are compositionally biased toward low complexity. Ser64 is subject to Phosphoserine; by ATM and ATR. Over residues 151-164 (RSRRRRGSASRRSR) the composition is skewed to basic residues. A compositionally biased stretch (polar residues) spans 186-205 (VSRTQPHLPSMSQDSETRNP). A compositionally biased stretch (low complexity) spans 207–221 (SEDLQVSSSSSSDSE). Residues 263-273 (PKQSPQKTNPL) show a composition bias toward polar residues. The RING-type; degenerate zinc finger occupies 287-331 (CTICFEHWTNAGDHRLSALRCGHLFGYKCISKWLKGQARKCPQCN). Residues 361 to 403 (SLLKEQMLRKQAELESAQCRLQLQVLTDECSKLHSRVQDLQKL) adopt a coiled-coil conformation. WD repeat units follow at residues 494-536 (MHGK…QTYN), 538-576 (GRPV…SHIQ), and 582-627 (KARC…SHWP).

In terms of assembly, interacts with MDM2 and p53/TP53. Binds to the RPA complex via direct interaction with RPA2. Interacts with RAD51. In terms of processing, phosphorylated at Ser-46 and Ser-63 upon DNA damage by ATM or ATR. ATM phosphorylation occurs at early times upon DNA damage, while ATR is the major kinase at later times. Phosphorylation by ATM and ATR is required to stabilize p53/TP53. Part of the phosphorylation depends upon RPA2 presence.

The protein localises to the nucleus. The protein resides in the PML body. It localises to the cytoplasm. It carries out the reaction S-ubiquitinyl-[E2 ubiquitin-conjugating enzyme]-L-cysteine + [acceptor protein]-L-lysine = [E2 ubiquitin-conjugating enzyme]-L-cysteine + N(6)-ubiquitinyl-[acceptor protein]-L-lysine.. The protein operates within protein modification; protein ubiquitination. Its function is as follows. E3 ubiquitin-protein ligase required for the repair of DNA interstrand cross-links (ICL) in response to DNA damage. Plays a key role in RPA-mediated DNA damage signaling and repair. Acts by mediating ubiquitination of the RPA complex (RPA1, RPA2 and RPA3 subunits) and RAD51 at stalled replication forks, leading to remove them from DNA damage sites and promote homologous recombination. Also mediates the ubiquitination of p53/TP53 in the late response to DNA damage, and acts as a positive regulator of p53/TP53 stability, thereby regulating the G1/S DNA damage checkpoint. May act by catalyzing the formation of short polyubiquitin chains on p53/TP53 that are not targeted to the proteasome. In response to ionizing radiation, interacts with MDM2 and enhances p53/TP53 ubiquitination, possibly by restricting MDM2 from extending polyubiquitin chains on ubiquitinated p53/TP53. Required to translesion DNA synthesis across DNA-protein cross-link adducts by catalyzing ubiquitination of proteins on single-stranded DNA (ssDNA). In Ailuropoda melanoleuca (Giant panda), this protein is E3 ubiquitin-protein ligase RFWD3 (RFWD3).